Reading from the N-terminus, the 218-residue chain is Protein GrpE (218 aa).

Residues Met-1–Gln-10 are compositionally biased toward polar residues. Disordered stretches follow at residues Met-1–Glu-44 and Ser-198–Ser-218. Residues Gly-200–Ser-218 are compositionally biased toward low complexity.

This sequence belongs to the GrpE family. Homodimer.

It is found in the cytoplasm. Functionally, participates actively in the response to hyperosmotic and heat shock by preventing the aggregation of stress-denatured proteins, in association with DnaK and GrpE. It is the nucleotide exchange factor for DnaK and may function as a thermosensor. Unfolded proteins bind initially to DnaJ; upon interaction with the DnaJ-bound protein, DnaK hydrolyzes its bound ATP, resulting in the formation of a stable complex. GrpE releases ADP from DnaK; ATP binding to DnaK triggers the release of the substrate protein, thus completing the reaction cycle. Several rounds of ATP-dependent interactions between DnaJ, DnaK and GrpE are required for fully efficient folding. This is Protein GrpE from Parasynechococcus marenigrum (strain WH8102).